Here is a 227-residue protein sequence, read N- to C-terminus: PKHD-type hydroxylase Bphy_5374 (227 aa).

One can recognise a Fe2OG dioxygenase domain in the interval 79–179 (KVYPPLFNRY…RVASFFWVQS (101 aa)). 3 residues coordinate Fe cation: His97, Asp99, and His160. Arg170 serves as a coordination point for 2-oxoglutarate.

The cofactor is Fe(2+). Requires L-ascorbate as cofactor.

In Paraburkholderia phymatum (strain DSM 17167 / CIP 108236 / LMG 21445 / STM815) (Burkholderia phymatum), this protein is PKHD-type hydroxylase Bphy_5374.